The primary structure comprises 463 residues: ATP-dependent protease ATPase subunit HslU (463 aa).

ATP contacts are provided by residues valine 19, 61–66 (GVGKTE), aspartate 277, glutamate 341, and arginine 413.

It belongs to the ClpX chaperone family. HslU subfamily. A double ring-shaped homohexamer of HslV is capped on each side by a ring-shaped HslU homohexamer. The assembly of the HslU/HslV complex is dependent on binding of ATP.

Its subcellular location is the cytoplasm. Its function is as follows. ATPase subunit of a proteasome-like degradation complex; this subunit has chaperone activity. The binding of ATP and its subsequent hydrolysis by HslU are essential for unfolding of protein substrates subsequently hydrolyzed by HslV. HslU recognizes the N-terminal part of its protein substrates and unfolds these before they are guided to HslV for hydrolysis. The chain is ATP-dependent protease ATPase subunit HslU from Shouchella clausii (strain KSM-K16) (Alkalihalobacillus clausii).